The following is a 430-amino-acid chain: Ribosomal protein uS12 methylthiotransferase RimO (430 aa).

The MTTase N-terminal domain occupies 2 to 119 (ISVYSISLGC…WPEMIGRALG (118 aa)). [4Fe-4S] cluster-binding residues include Cys11, Cys46, Cys81, Cys145, Cys149, and Cys152. Residues 131-361 (STGPSYAYLK…MEVQAEISEE (231 aa)) form the Radical SAM core domain. One can recognise a TRAM domain in the interval 364–430 (EGFTGSDEDV…SRTYDLVALS (67 aa)).

Belongs to the methylthiotransferase family. RimO subfamily. Requires [4Fe-4S] cluster as cofactor.

It is found in the cytoplasm. The catalysed reaction is L-aspartate(89)-[ribosomal protein uS12]-hydrogen + (sulfur carrier)-SH + AH2 + 2 S-adenosyl-L-methionine = 3-methylsulfanyl-L-aspartate(89)-[ribosomal protein uS12]-hydrogen + (sulfur carrier)-H + 5'-deoxyadenosine + L-methionine + A + S-adenosyl-L-homocysteine + 2 H(+). Functionally, catalyzes the methylthiolation of an aspartic acid residue of ribosomal protein uS12. The protein is Ribosomal protein uS12 methylthiotransferase RimO of Oleidesulfovibrio alaskensis (strain ATCC BAA-1058 / DSM 17464 / G20) (Desulfovibrio alaskensis).